Reading from the N-terminus, the 214-residue chain is Corrinoid adenosyltransferase (214 aa).

An ATP-binding site is contributed by G50–S56.

This sequence belongs to the Cob(I)alamin adenosyltransferase family. Monomer. The cofactor is Mn(2+).

The protein resides in the cytoplasm. It catalyses the reaction 2 cob(II)yrinate a,c diamide + reduced [electron-transfer flavoprotein] + 2 ATP = 2 adenosylcob(III)yrinate a,c-diamide + 2 triphosphate + oxidized [electron-transfer flavoprotein] + 3 H(+). The catalysed reaction is 2 cob(II)alamin + reduced [electron-transfer flavoprotein] + 2 ATP = 2 adenosylcob(III)alamin + 2 triphosphate + oxidized [electron-transfer flavoprotein] + 3 H(+). It participates in cofactor biosynthesis; adenosylcobalamin biosynthesis; adenosylcobalamin from cob(II)yrinate a,c-diamide: step 2/7. Functionally, required for both de novo synthesis of the corrin ring for the assimilation of exogenous corrinoids. Participates in the adenosylation of a variety of incomplete and complete corrinoids. This is Corrinoid adenosyltransferase (cobO) from Sinorhizobium sp.